Reading from the N-terminus, the 377-residue chain is Mitogen-activated protein kinase pmk-1 (377 aa).

The region spanning 35–319 (YINLTPIGTG…AKEAMEHEYL (285 aa)) is the Protein kinase domain. ATP is bound by residues 41 to 49 (IGTGAYGTV) and Lys-64. Asp-179 functions as the Proton acceptor in the catalytic mechanism. A Phosphothreonine modification is found at Thr-191. The TXY signature appears at 191 to 193 (TGY). Phosphotyrosine is present on Tyr-193.

Belongs to the protein kinase superfamily. CMGC Ser/Thr protein kinase family. MAP kinase subfamily. As to quaternary structure, interacts with transcription factor atf-7; perhaps in a manner dependent on dual specificity protein kinase sek-1. It depends on Mg(2+) as a cofactor. The cofactor is Mn(2+). In terms of processing, dually phosphorylated on Thr-191 and Tyr-193, probably by sek-1, which activates the enzyme. Increased phosphorylation in response to the heavy metal arsenite. Increased phosphorylation in response to intestinal colonization by probiotic Lactobacillus fermentum strain JDFM216. In terms of tissue distribution, expressed in intestinal cells.

It is found in the nucleus. It carries out the reaction L-seryl-[protein] + ATP = O-phospho-L-seryl-[protein] + ADP + H(+). The catalysed reaction is L-threonyl-[protein] + ATP = O-phospho-L-threonyl-[protein] + ADP + H(+). With respect to regulation, activated by phosphorylation on threonine and tyrosine. Inhibited by pyridinyl-imidazole related compounds. Functionally, serine/threonine kinase which responds to activation by environmental stress and pro-inflammatory cytokines by phosphorylating downstream targets. As part of a MAP kinase signaling pathway, plays a role in modulation of lifespan and immunity. Phosphorylates skn-1 which probably regulates skn-1 nuclear translocation in response to oxidative stress. Probably by activating skn-1, involved in the up-regulation of gcs-1 and glutathione-S-transferase gst-4 expression upon bacteria infection. Up-regulates expression of gcs-1 in intestinal cells upon arsenite treatment. Functions downstream of the MAPKK sek-1 and the MAPKKK nsy-1 as the MAP kinase which regulates pathogen resistance and responses to oxidative stress. Required for expression of antimicrobial peptide nlp-29 in response to fungal infection or physical injury. Involved in resistance to the nematotoxic C.cinerea galectin (Cgl2). May play a redundant role with other MAP kinases in susceptibility to anoxia, downstream of tir-1/nsy-1. Phosphorylates transcription factor rnt-1 during oxidative stress which results in rnt-1 stabilization in the intestine. Phosphorylates transcription factor atf-7 during pathogen infection resulting in modulation of target genes. Probably downstream of nsy-1 and sek-1, involved in germline apoptosis induced by heavy metals, such as Cu(2+). Regulates the basal expression of immune effector genes including irg-4, irg-5, mul-1 and drd-50. This Caenorhabditis elegans protein is Mitogen-activated protein kinase pmk-1.